Consider the following 212-residue polypeptide: Pyridoxine/pyridoxamine 5'-phosphate oxidase (212 aa).

Residues 8–11 (RREY) and Lys-66 each bind substrate. FMN contacts are provided by residues 61-66 (RIVLLK), 76-77 (FT), Arg-82, Lys-83, and Gln-105. Substrate contacts are provided by Tyr-123, Arg-127, and Ser-131. FMN is bound by residues 140–141 (QS) and Trp-185. Substrate is bound at residue 191 to 193 (RLH). Arg-195 serves as a coordination point for FMN.

This sequence belongs to the pyridoxamine 5'-phosphate oxidase family. Homodimer. It depends on FMN as a cofactor.

The enzyme catalyses pyridoxamine 5'-phosphate + O2 + H2O = pyridoxal 5'-phosphate + H2O2 + NH4(+). The catalysed reaction is pyridoxine 5'-phosphate + O2 = pyridoxal 5'-phosphate + H2O2. Its pathway is cofactor metabolism; pyridoxal 5'-phosphate salvage; pyridoxal 5'-phosphate from pyridoxamine 5'-phosphate: step 1/1. It functions in the pathway cofactor metabolism; pyridoxal 5'-phosphate salvage; pyridoxal 5'-phosphate from pyridoxine 5'-phosphate: step 1/1. Catalyzes the oxidation of either pyridoxine 5'-phosphate (PNP) or pyridoxamine 5'-phosphate (PMP) into pyridoxal 5'-phosphate (PLP). The sequence is that of Pyridoxine/pyridoxamine 5'-phosphate oxidase from Shewanella amazonensis (strain ATCC BAA-1098 / SB2B).